A 325-amino-acid chain; its full sequence is Transaldolase (325 aa).

Lys125 acts as the Schiff-base intermediate with substrate in catalysis.

The protein belongs to the transaldolase family. Type 2 subfamily.

The protein resides in the cytoplasm. The catalysed reaction is D-sedoheptulose 7-phosphate + D-glyceraldehyde 3-phosphate = D-erythrose 4-phosphate + beta-D-fructose 6-phosphate. It participates in carbohydrate degradation; pentose phosphate pathway; D-glyceraldehyde 3-phosphate and beta-D-fructose 6-phosphate from D-ribose 5-phosphate and D-xylulose 5-phosphate (non-oxidative stage): step 2/3. Transaldolase is important for the balance of metabolites in the pentose-phosphate pathway. The polypeptide is Transaldolase (Campylobacter jejuni subsp. jejuni serotype O:6 (strain 81116 / NCTC 11828)).